The sequence spans 1574 residues: Disco-interacting protein 2 homolog B (1574 aa).

Residues serine 9, serine 50, and serine 53 each carry the phosphoserine modification. Residues 12 to 130 (AVAALPPEVR…PMPTKRRSTF (119 aa)) enclose the DMAP1-binding domain. The interval 31–166 (LSEGDITQKG…AALSAALQQS (136 aa)) is disordered. Residues 52–62 (YSPQTQETDSI) are compositionally biased toward polar residues. A compositionally biased stretch (low complexity) spans 69–82 (QTPAPTAAQTSAPS). Threonine 70 is modified (phosphothreonine). The segment covering 91-103 (GARDERYRSDIHT) has biased composition (basic and acidic residues). Serine 99 is subject to Phosphoserine. Threonine 139 carries the phosphothreonine modification. Residues serine 145, serine 147, and serine 152 each carry the phosphoserine modification. A compositionally biased stretch (low complexity) spans 154–166 (RRQAALSAALQQS). Phosphoserine occurs at positions 177, 192, and 202. Residues 178–200 (IQGSSTSSSASSTLSHGEVKGTS) form a disordered region. A compositionally biased stretch (low complexity) spans 181–192 (SSTSSSASSTLS). Residues 217–244 (APPDVTATTSSSSSSLRPANIDLPPSGI) form a disordered region. Position 256 is a phosphoserine (serine 256).

This sequence belongs to the DIP2 family. In terms of assembly, interacts with alpha-tubulin. As to expression, highly expressed in brain and spinal cord (at protein level). In brain, expression is detected in the main olfactory bulb, cortex, lateral ventricle, cornu ammonis 1, cornu ammonis 3, dentate gyrus, striatum, cerebellar cortex and medial habenula. Expressed primarily in neurons including excitatory pyramidal neurons and inhibitory interneurons.

It is found in the cell projection. Its subcellular location is the dendrite. The protein localises to the axon. The protein resides in the perikaryon. Negatively regulates axonal outgrowth and is essential for normal synaptic transmission. Not required for regulation of axon polarity. Promotes acetylation of alpha-tubulin. The protein is Disco-interacting protein 2 homolog B (Dip2b) of Mus musculus (Mouse).